The primary structure comprises 257 residues: Glucanase inhibitor protein 1 (257 aa).

A signal peptide spans 1 to 28; it reads MKVFPALTSALVALGTAGVEAEHVQRSL. Residues 29 to 256 enclose the Peptidase S1 domain; the sequence is VMGGGTVPVG…GLEWINSVIK (228 aa). A disulfide bond links C56 and C72. N-linked (GlcNAc...) asparagine glycans are attached at residues N107 and N180. 2 disulfides stabilise this stretch: C181–C191 and C201–C232. N-linked (GlcNAc...) asparagine glycosylation occurs at N213.

This sequence belongs to the peptidase S1 family. Interacts with host endoglucanases EGaseA.

The protein localises to the secreted. Functionally, secreted effector that suppresses host plant glucan elicitor-mediated defense responses. Targets host endoglucanase EGaseA and inhibits the EGaseA-mediated release of elicitor-active glucan oligosaccharides from P.sojae cell walls. This Phytophthora sojae (Soybean stem and root rot agent) protein is Glucanase inhibitor protein 1.